Reading from the N-terminus, the 696-residue chain is Two-component response regulator ORR22 (696 aa).

In terms of domain architecture, Response regulatory spans 27–142 (RVLAVDDDPV…ELRNIWQHVV (116 aa)). 4-aspartylphosphate is present on Asp-78. A disordered region spans residues 154–214 (LDFSKECNKP…DYQENDEPSA (61 aa)). Residues 176-185 (TCGSSDQNGR) are compositionally biased toward polar residues. A compositionally biased stretch (acidic residues) spans 195-211 (GEDDDEGDDNDYQENDE). The myb-like GARP DNA-binding region spans 214–273 (AAKKPRVVWSVELHRKFVAAVNQLGIDKAVPKRILELMNVEKLTRENVASHLQKYRLYLK).

It belongs to the ARR family. Type-B subfamily. In terms of processing, two-component system major event consists of a His-to-Asp phosphorelay between a sensor histidine kinase (HK) and a response regulator (RR). In plants, the His-to-Asp phosphorelay involves an additional intermediate named Histidine-containing phosphotransfer protein (HPt). This multistep phosphorelay consists of a His-Asp-His-Asp sequential transfer of a phosphate group between first a His and an Asp of the HK protein, followed by the transfer to a conserved His of the HPt protein and finally the transfer to an Asp in the receiver domain of the RR protein.

The protein localises to the nucleus. Its function is as follows. Transcriptional activator that binds specific DNA sequence. Functions as a response regulator involved in His-to-Asp phosphorelay signal transduction system. Phosphorylation of the Asp residue in the receiver domain activates the ability of the protein to promote the transcription of target genes. May directly activate some type-A response regulators in response to cytokinins. Functions as a response regulator in response to cytokinins. The sequence is that of Two-component response regulator ORR22 from Oryza sativa subsp. japonica (Rice).